Here is a 402-residue protein sequence, read N- to C-terminus: Multidrug resistance protein MdtH (402 aa).

The Cytoplasmic portion of the chain corresponds to 1 to 12 (MSRVSQARNLGK). The helical transmembrane segment at 13 to 33 (YFLLIDNMLVVLGFFVVFPLI) threads the bilayer. At 34-98 (SIRFVDQMGW…GFATMGIAHE (65 aa)) the chain is on the periplasmic side. A helical membrane pass occupies residues 99-116 (PWLLWFSCLLSGLGGTLF). Over 117–138 (DPPRSALVVKLIRPQQRGRFFS) the chain is Cytoplasmic. The helical transmembrane segment at 139-159 (LLMMQDSAGAVIGALLGSWLL) threads the bilayer. The Periplasmic segment spans residues 160-164 (QYDFR). A helical membrane pass occupies residues 165–185 (LVCATGAVLFVLCAAFNAWLL). At 186–213 (PAWKLSTVRTPVREGMTRVMRDKRFVTY) the chain is on the cytoplasmic side. A helical membrane pass occupies residues 214-234 (VLTLAGYYMLAVQVMLMLPIM). Residues 235–243 (VNDVAGAPS) are Periplasmic-facing. Residues 244-264 (AVKWMYAIEACLSLTLLYPIA) traverse the membrane as a helical segment. Topologically, residues 265–276 (RWSEKHFRLEHR) are cytoplasmic. A helical transmembrane segment spans residues 277–297 (LMAGLLIMSLSMMPVGMVSGL). Topologically, residues 298 to 299 (QQ) are periplasmic. A helical transmembrane segment spans residues 300–320 (LFTLICLFYIGSIIAEPARET). At 321 to 339 (LSASLADARARGSYMGFSR) the chain is on the cytoplasmic side. Residues 340–360 (LGLAIGGAIGYIGGGWLFDLG) traverse the membrane as a helical segment. The Periplasmic segment spans residues 361–367 (KSAHQPE). A helical membrane pass occupies residues 368–388 (LPWMMLGIIGIFTFLALGWQF). Residues 389-402 (SQKRAARRLLERDA) are Cytoplasmic-facing.

Belongs to the major facilitator superfamily. DHA1 family. MdtH (TC 2.A.1.2.21) subfamily.

The protein localises to the cell inner membrane. Confers resistance to norfloxacin and enoxacin. The protein is Multidrug resistance protein MdtH of Escherichia coli O139:H28 (strain E24377A / ETEC).